Consider the following 186-residue polypeptide: Probable nicotinate-nucleotide adenylyltransferase (186 aa).

This sequence belongs to the NadD family.

It catalyses the reaction nicotinate beta-D-ribonucleotide + ATP + H(+) = deamido-NAD(+) + diphosphate. It functions in the pathway cofactor biosynthesis; NAD(+) biosynthesis; deamido-NAD(+) from nicotinate D-ribonucleotide: step 1/1. In terms of biological role, catalyzes the reversible adenylation of nicotinate mononucleotide (NaMN) to nicotinic acid adenine dinucleotide (NaAD). The sequence is that of Probable nicotinate-nucleotide adenylyltransferase from Tropheryma whipplei (strain Twist) (Whipple's bacillus).